Consider the following 505-residue polypeptide: Tyrosine-protein kinase isoform SRK1 (505 aa).

2 stretches are compositionally biased toward polar residues: residues 1–10 (MGSCCSSQDG) and 18–31 (AGSTVDSHELSQSV). The interval 1–53 (MGSCCSSQDGDGNGKATAGSTVDSHELSQSVKGKIKQPEPKPKPPPQVPPAQD) is disordered. The 63-residue stretch at 54–116 (VKYPIYVGKY…PSNYVAEYKS (63 aa)) folds into the SH3 domain. Residues 122–214 (WFLGKIKRVE…GLCCKLLYPC (93 aa)) form the SH2 domain. Residues 240–493 (IKLLRRLGAG…TLQWQLEEFF (254 aa)) form the Protein kinase domain. Residues 246 to 254 (LGAGQFGEV) and lysine 268 contribute to the ATP site. The active-site Proton acceptor is aspartate 359.

This sequence belongs to the protein kinase superfamily. Tyr protein kinase family. SRC subfamily.

It is found in the cytoplasm. The enzyme catalyses L-tyrosyl-[protein] + ATP = O-phospho-L-tyrosyl-[protein] + ADP + H(+). This Spongilla lacustris (Freshwater sponge) protein is Tyrosine-protein kinase isoform SRK1 (SRK1).